The chain runs to 459 residues: O-phospho-L-seryl-tRNA:Cys-tRNA synthase 1 (459 aa).

Pyridoxal 5'-phosphate contacts are provided by residues 152-153 (AR), Asn257, and 280-282 (SGH). At Lys283 the chain carries N6-(pyridoxal phosphate)lysine.

Belongs to the SepCysS family. As to quaternary structure, homodimer. Interacts with SepRS. Pyridoxal 5'-phosphate serves as cofactor.

The catalysed reaction is O-phospho-L-seryl-tRNA(Cys) + hydrogen sulfide + H(+) = L-cysteinyl-tRNA(Cys) + phosphate. Functionally, converts O-phospho-L-seryl-tRNA(Cys) (Sep-tRNA(Cys)) to L-cysteinyl-tRNA(Cys) (Cys-tRNA(Cys)). In Methanococcoides burtonii (strain DSM 6242 / NBRC 107633 / OCM 468 / ACE-M), this protein is O-phospho-L-seryl-tRNA:Cys-tRNA synthase 1.